The chain runs to 104 residues: Thioredoxin (104 aa).

One can recognise a Thioredoxin domain in the interval 2 to 104 (AIVKVTDADF…NLAEVLDKHL (103 aa)). An intrachain disulfide couples C29 to C32.

It belongs to the thioredoxin family.

Functionally, component of the thioredoxin-thioredoxin reductase system. Participates in various redox reactions through the reversible oxidation of its active center dithiol to a disulfide and catalyzes dithiol-disulfide exchange reactions. This is Thioredoxin (trxA) from Staphylococcus aureus (strain N315).